The primary structure comprises 77 residues: Acyl carrier protein (77 aa).

The region spanning 2 to 77 is the Carrier domain; that stretch reads SNIEERVKKI…AAIDYVNSAQ (76 aa). Serine 37 bears the O-(pantetheine 4'-phosphoryl)serine mark.

This sequence belongs to the acyl carrier protein (ACP) family. Post-translationally, 4'-phosphopantetheine is transferred from CoA to a specific serine of apo-ACP by AcpS. This modification is essential for activity because fatty acids are bound in thioester linkage to the sulfhydryl of the prosthetic group.

Its subcellular location is the cytoplasm. Its pathway is lipid metabolism; fatty acid biosynthesis. Functionally, carrier of the growing fatty acid chain in fatty acid biosynthesis. This chain is Acyl carrier protein, found in Vibrio campbellii (strain ATCC BAA-1116).